We begin with the raw amino-acid sequence, 140 residues long: Small ribosomal subunit protein uS19 (140 aa).

Residues 55-74 (LAEARESGTEETANNPIRTH) are disordered.

It belongs to the universal ribosomal protein uS19 family.

In terms of biological role, protein S19 forms a complex with S13 that binds strongly to the 16S ribosomal RNA. In Halobacterium salinarum (strain ATCC 29341 / DSM 671 / R1), this protein is Small ribosomal subunit protein uS19.